A 236-amino-acid chain; its full sequence is Large ribosomal subunit protein uL1 (236 aa).

This sequence belongs to the universal ribosomal protein uL1 family. In terms of assembly, part of the 50S ribosomal subunit.

In terms of biological role, binds directly to 23S rRNA. The L1 stalk is quite mobile in the ribosome, and is involved in E site tRNA release. Protein L1 is also a translational repressor protein, it controls the translation of the L11 operon by binding to its mRNA. The protein is Large ribosomal subunit protein uL1 of Corynebacterium efficiens (strain DSM 44549 / YS-314 / AJ 12310 / JCM 11189 / NBRC 100395).